The following is a 529-amino-acid chain: Non-reducing end alpha-L-arabinofuranosidase BoGH43B (529 aa).

The N-terminal stretch at 1–23 is a signal peptide; that stretch reads MMKNSCRLLLILIGLWMANVSLA. Catalysis depends on Asp38, which acts as the Proton acceptor. The Proton donor role is filled by Glu198.

Belongs to the glycosyl hydrolase 43 family.

It is found in the periplasm. It carries out the reaction Hydrolysis of terminal non-reducing alpha-L-arabinofuranoside residues in alpha-L-arabinosides.. It functions in the pathway glucan metabolism; xyloglucan degradation. Functionally, alpha-L-arabinofuranosidase involved in xyloglucan degradation by mediating the cleavage of terminal non-reducing alpha-L-arabinofuranoside residues in xyloglucan branches, converting the 'S' units to 'X' units. The chain is Non-reducing end alpha-L-arabinofuranosidase BoGH43B from Bacteroides ovatus (strain ATCC 8483 / DSM 1896 / JCM 5824 / BCRC 10623 / CCUG 4943 / NCTC 11153).